Here is a 286-residue protein sequence, read N- to C-terminus: Bifunctional protein FolD (286 aa).

Residues 165 to 167 and Ser-190 contribute to the NADP(+) site; that span reads GRS.

Belongs to the tetrahydrofolate dehydrogenase/cyclohydrolase family. In terms of assembly, homodimer.

It catalyses the reaction (6R)-5,10-methylene-5,6,7,8-tetrahydrofolate + NADP(+) = (6R)-5,10-methenyltetrahydrofolate + NADPH. The catalysed reaction is (6R)-5,10-methenyltetrahydrofolate + H2O = (6R)-10-formyltetrahydrofolate + H(+). It functions in the pathway one-carbon metabolism; tetrahydrofolate interconversion. Functionally, catalyzes the oxidation of 5,10-methylenetetrahydrofolate to 5,10-methenyltetrahydrofolate and then the hydrolysis of 5,10-methenyltetrahydrofolate to 10-formyltetrahydrofolate. This is Bifunctional protein FolD from Staphylococcus epidermidis (strain ATCC 12228 / FDA PCI 1200).